Reading from the N-terminus, the 455-residue chain is Phosphoglucosamine mutase (455 aa).

Serine 107 functions as the Phosphoserine intermediate in the catalytic mechanism. Serine 107, aspartate 247, aspartate 249, and aspartate 251 together coordinate Mg(2+). At serine 107 the chain carries Phosphoserine.

The protein belongs to the phosphohexose mutase family. The cofactor is Mg(2+). Post-translationally, activated by phosphorylation.

It carries out the reaction alpha-D-glucosamine 1-phosphate = D-glucosamine 6-phosphate. Catalyzes the conversion of glucosamine-6-phosphate to glucosamine-1-phosphate. In Leuconostoc citreum (strain KM20), this protein is Phosphoglucosamine mutase.